Here is a 495-residue protein sequence, read N- to C-terminus: Putative FAD-containing monooxygenase MymA (495 aa).

Residues Ser-15, Glu-36, Trp-45, 56–57 (DS), and Val-104 contribute to the FAD site.

Belongs to the FAD-binding monooxygenase family. FAD is required as a cofactor.

Functionally, required for maintaining the appropriate mycolic acid composition and permeability of the envelope on its exposure to acidic pH. The protein is Putative FAD-containing monooxygenase MymA (mymA) of Mycobacterium tuberculosis (strain CDC 1551 / Oshkosh).